The sequence spans 357 residues: O-methyltransferase pgmB (357 aa).

Position 206 (Asp206) interacts with S-adenosyl-L-methionine. His256 acts as the Proton acceptor in catalysis.

Belongs to the class I-like SAM-binding methyltransferase superfamily. Cation-independent O-methyltransferase family.

Its pathway is pigment biosynthesis. It participates in secondary metabolite biosynthesis. Its function is as follows. O-methyltransferase; part of the gene cluster that mediates the biosynthesis of pleosporalin A, ascomycone A, as well as a third cryptic naphthoquinone derived pigment, all responsible for the coloration of conidia. Specifically methylates position C-6 of the pgmA product 3-acetonyl-1,6,8-trihydroxy-2-naphthaldehyde to yield fusarubinaldehyde. The pathway begins with the biosynthesis of the cyclized heptaketide 3-acetonyl-1,6,8-trihydroxy-2-naphthaldehyde by the NR-PKS pgmA. The C-6 hydroxyl group is further methylated by the O-methyltransferase pgmB to yield fusarubinaldehyde which is in turn oxidized by the cytochrome P450 monooxygenase pgmC at C-9. The C-1 hydroxyl group is then methylated spontaneously. Although pgmE, pgmD and pgmH are essential for the production of pleosporalin A, it is not the case for the 2 other final products and it remains difficult to assign a specific function to each enzyme. PgmF and pgmG seem not to be involved in pigment biosynthesis although they were regulated by the cluster-specific transcription factor pgmR. The sequence is that of O-methyltransferase pgmB from Aspergillus terreus (strain NIH 2624 / FGSC A1156).